The primary structure comprises 58 residues: MAVPKKKTSKAKRNQRSATWKGKAAIAAKRAMSIGKSVLSGRAQGFVYPVSDTDEAEA.

Residues 1–15 (MAVPKKKTSKAKRNQ) are compositionally biased toward basic residues. The segment at 1–23 (MAVPKKKTSKAKRNQRSATWKGK) is disordered.

Belongs to the bacterial ribosomal protein bL32 family.

This chain is Large ribosomal subunit protein bL32, found in Synechococcus sp. (strain CC9902).